The primary structure comprises 760 residues: MATVSGTEEEENAKKRKAHGMLKLYYGMTEEGKACERHLEPTDVDGVHFNPELYLTKLRKESSLSQLMDVEADMVRQIRSLDSEMQTLVYENYNKFISATDTIRKMKNDFKKMEDEMDGLATNMAVITEFSARISSTLQERHQQITKLSGVHTLLRKLQFLFELPARLKKCIELGAYAQAVSYHSKARSVLHQYQHMPSFHGIQTDCQAIMAGLADTLRQRFRDPASSPQDLSECVEMLLNLEEPAHLLCDEFLAHGRGRLASHLSDLQESGDILEFVDRGCGGFISDACLLAASYQSLFSKEAGSTAQMAEAKLTSFLEELSTGYFELVEKRLRQEKSLGDNSLLVRALDRFHRRLQAPSKLVPGCGFNRRGTEIVVRAAQERLAQYLQALKDFFQGCLTDVRQALAAPRLPGKEMPALGDLLAGLSASVLNQIKTVLAAVHLFTAKDVAFSDKPYFKGEFCSQGVREGLIVAFIKSVCQTARQFCEIPGEKGTSTPPALLLLLSRLCLDYETSTISYILTLTDEQFLGQDHSPVTPVSSLCSLARSTAQTLLNQYVKSQGLVVSQMLRKSVETRDWVTTIEPRNVRAVMKRVVEDITGVDVQVGLLYEEGVRKAHSSDSSKRTFSVYSSSRLQGRYAQSYTPSAPMDTNLLSNIQKLFSERIDIFSTVQFNKVSILTGIIKISLKTFLECVRLRTFGRYGLQQIQVDCHYLQLYLWRFVSDENLVHCLLDEVVGSAAHRCLDPAPMEQSVIEVICERG.

2 coiled-coil regions span residues 97–127 (ISAT…MAVI) and 374–395 (TEIV…LKDF).

This sequence belongs to the VPS51 family. In terms of assembly, component of the Golgi-associated retrograde protein (GARP) complex Component of the endosome-associated retrograde protein (EARP) complex.

Its subcellular location is the golgi apparatus. It localises to the trans-Golgi network. It is found in the recycling endosome. Functionally, involved in retrograde transport from early and late endosomes to the late Golgi. The GARP complex is required for the maintenance of protein retrieval from endosomes to the TGN, acid hydrolase sorting, lysosome function, endosomal cholesterol traffic and autophagy. Acts as a component of the EARP complex that is involved in endocytic recycling. In Xenopus tropicalis (Western clawed frog), this protein is Vacuolar protein sorting-associated protein 51 homolog (vps51).